A 633-amino-acid polypeptide reads, in one-letter code: DNA mismatch repair protein MutL (633 aa).

This sequence belongs to the DNA mismatch repair MutL/HexB family.

This protein is involved in the repair of mismatches in DNA. It is required for dam-dependent methyl-directed DNA mismatch repair. May act as a 'molecular matchmaker', a protein that promotes the formation of a stable complex between two or more DNA-binding proteins in an ATP-dependent manner without itself being part of a final effector complex. The chain is DNA mismatch repair protein MutL from Bacillus pumilus (strain SAFR-032).